Consider the following 731-residue polypeptide: MTEFYSDTIGLPKTDPRLWRLRTDELGRESWEYLTPQQAANDPPSTFTQWLLQDPKFPQPHPERNKHSPDFSAFDACHNGASFFKLLQEPDSGIFPCQYKGPMFMTIGYVAVNYIAGIEIPEHERIELIRYIVNTAHPVDGGWGLHSVDKSTVFGTVLNYVILRLLGLPKDHPVCAKARSTLLRLGGAIGSPHWGKIWLSALNLYKWEGVNPAPPETWLLPYSLPMHPGRWWVHTRGVYIPVSYLSLVKFSCPMTPLLEELRNEIYTKPFDKINFSKNRNTVCGVDLYYPHSTTLNIANSLVVFYEKYLRNRFIYSLSKKKVYDLIKTELQNTDSLCIAPVNQAFCALVTLIEEGVDSEAFQRLQYRFKDALFHGPQGMTIMGTNGVQTWDCAFAIQYFFVAGLAERPEFYNTIVSAYKFLCHAQFDTECVPGSYRDKRKGAWGFSTKTQGYTVADCTAEAIKAIIMVKNSPVFSEVHHMISSERLFEGIDVLLNLQNIGSFEYGSFATYEKIKAPLAMETLNPAEVFGNIMVEYPYVECTDSSVLGLTYFHKYFDYRKEEIRTRIRIAIEFIKKSQLPDGSWYGSWGICFTYAGMFALEALHTVGETYENSSTVRKGCDFLVSKQMKDGGWGESMKSSELHSYVDSEKSLVVQTAWALIALLFAEYPNKEVIDRGIDLLKNRQEESGEWKFESVEGVFNHSCAIEYPSYRFLFPIKALGMYSRAYETHTL.

An N-acetylthreonine modification is found at Thr2. One copy of the PFTB 1 repeat lies at 125–167 (RIELIRYIVNTAHPVDGGWGLHSVDKSTVFGTVLNYVILRLLG). Asp456 serves as the catalytic Proton donor. The stretch at 615-661 (VRKGCDFLVSKQMKDGGWGESMKSSELHSYVDSEKSLVVQTAWALIA) is one PFTB 2 repeat.

This sequence belongs to the terpene cyclase/mutase family.

The protein resides in the lipid droplet. Its subcellular location is the endoplasmic reticulum membrane. The enzyme catalyses (S)-2,3-epoxysqualene = lanosterol. It functions in the pathway terpene metabolism; lanosterol biosynthesis; lanosterol from farnesyl diphosphate: step 3/3. Its activity is regulated as follows. Catalytic activity requires the presence of ERG27. Its function is as follows. Lanosterol synthase; part of the third module of ergosterol biosynthesis pathway that includes the late steps of the pathway. ERG7 catalyzes the cyclization of (S)-2,3 oxidosqualene to lanosterol, a reaction that forms the sterol core. The third module or late pathway involves the ergosterol synthesis itself through consecutive reactions that mainly occur in the endoplasmic reticulum (ER) membrane. Firstly, the squalene synthase ERG9 catalyzes the condensation of 2 farnesyl pyrophosphate moieties to form squalene, which is the precursor of all steroids. Squalene synthase is crucial for balancing the incorporation of farnesyl diphosphate (FPP) into sterol and nonsterol isoprene synthesis. Secondly, the squalene epoxidase ERG1 catalyzes the stereospecific oxidation of squalene to (S)-2,3-epoxysqualene, which is considered to be a rate-limiting enzyme in steroid biosynthesis. Then, the lanosterol synthase ERG7 catalyzes the cyclization of (S)-2,3 oxidosqualene to lanosterol, a reaction that forms the sterol core. In the next steps, lanosterol is transformed to zymosterol through a complex process involving various demethylation, reduction and desaturation reactions. The lanosterol 14-alpha-demethylase ERG11 (also known as CYP51) catalyzes C14-demethylation of lanosterol to produce 4,4'-dimethyl cholesta-8,14,24-triene-3-beta-ol, which is critical for ergosterol biosynthesis. The C-14 reductase ERG24 reduces the C14=C15 double bond of 4,4-dimethyl-cholesta-8,14,24-trienol to produce 4,4-dimethyl-cholesta-8,24-dienol. 4,4-dimethyl-cholesta-8,24-dienol is substrate of the C-4 demethylation complex ERG25-ERG26-ERG27 in which ERG25 catalyzes the three-step monooxygenation required for the demethylation of 4,4-dimethyl and 4alpha-methylsterols, ERG26 catalyzes the oxidative decarboxylation that results in a reduction of the 3-beta-hydroxy group at the C-3 carbon to an oxo group, and ERG27 is responsible for the reduction of the keto group on the C-3. ERG28 has a role as a scaffold to help anchor ERG25, ERG26 and ERG27 to the endoplasmic reticulum and ERG29 regulates the activity of the iron-containing C4-methylsterol oxidase ERG25. Then, the sterol 24-C-methyltransferase ERG6 catalyzes the methyl transfer from S-adenosyl-methionine to the C-24 of zymosterol to form fecosterol. The C-8 sterol isomerase ERG2 catalyzes the reaction which results in unsaturation at C-7 in the B ring of sterols and thus converts fecosterol to episterol. The sterol-C5-desaturase ERG3 then catalyzes the introduction of a C-5 double bond in the B ring to produce 5-dehydroepisterol. The C-22 sterol desaturase ERG5 further converts 5-dehydroepisterol into ergosta-5,7,22,24(28)-tetraen-3beta-ol by forming the C-22(23) double bond in the sterol side chain. Finally, ergosta-5,7,22,24(28)-tetraen-3beta-ol is substrate of the C-24(28) sterol reductase ERG4 to produce ergosterol. The chain is Lanosterol synthase ERG7 from Saccharomyces cerevisiae (strain ATCC 204508 / S288c) (Baker's yeast).